The sequence spans 322 residues: Mitochondrial thiamine pyrophosphate carrier 1 (322 aa).

3 Solcar repeats span residues 12–111, 122–208, and 215–310; these read GSKT…VTLA, PAAA…LRVP, and PFGS…VLRL. Transmembrane regions (helical) follow at residues 18-38, 92-108, 128-148, 180-200, 221-241, and 285-302; these read MIAG…LDVV, LMYV…YRSV, FIAG…LDLL, FFQG…IFFA, ATAG…FDLI, and GLTV…VTMW.

The protein belongs to the mitochondrial carrier (TC 2.A.29) family.

The protein localises to the mitochondrion inner membrane. Functionally, mitochondrial transporter that mediates uptake of thiamine pyrophosphate (ThPP) into mitochondria. The sequence is that of Mitochondrial thiamine pyrophosphate carrier 1 (tpc1) from Sclerotinia sclerotiorum (strain ATCC 18683 / 1980 / Ss-1) (White mold).